Reading from the N-terminus, the 382-residue chain is Alanine racemase (382 aa).

The Proton acceptor; specific for D-alanine role is filled by Lys-39. N6-(pyridoxal phosphate)lysine is present on Lys-39. Residue Arg-138 participates in substrate binding. Tyr-265 serves as the catalytic Proton acceptor; specific for L-alanine. Residue Met-312 participates in substrate binding.

The protein belongs to the alanine racemase family. Requires pyridoxal 5'-phosphate as cofactor.

It catalyses the reaction L-alanine = D-alanine. It functions in the pathway amino-acid biosynthesis; D-alanine biosynthesis; D-alanine from L-alanine: step 1/1. Catalyzes the interconversion of L-alanine and D-alanine. May also act on other amino acids. This Staphylococcus saprophyticus subsp. saprophyticus (strain ATCC 15305 / DSM 20229 / NCIMB 8711 / NCTC 7292 / S-41) protein is Alanine racemase (alr).